Consider the following 548-residue polypeptide: Flagellin (548 aa).

It belongs to the bacterial flagellin family.

Its subcellular location is the secreted. The protein localises to the bacterial flagellum. Flagellin is the subunit protein which polymerizes to form the filaments of bacterial flagella. In Escherichia coli O127:H6 (strain E2348/69 / EPEC), this protein is Flagellin (fliC).